Reading from the N-terminus, the 575-residue chain is Flagellin A (575 aa).

Tandem repeats lie at residues 405–409, 411–415, and 447–450.

This sequence belongs to the bacterial flagellin family. Heteromer of flaA and flaB.

It is found in the secreted. The protein localises to the bacterial flagellum. Its function is as follows. Flagellin is the subunit protein which polymerizes to form the filaments of bacterial flagella. The sequence is that of Flagellin A (flaA) from Campylobacter jejuni.